Reading from the N-terminus, the 594-residue chain is MNNSKIPKLSFHSDPNNVTRDFPKTKRQKVQKREMDMILTPNNNKLNILHSSGSGIRRCYTDDTSATYTKKLTFGGDPKIIERVKNNERKVRKDIDSLLNAISEIEKESVRIHARELPAITLELDAKVKACRELQNEIDGLSTEMDLKDNQCDLQRKNVELSSKNIVSMHAVKVQEFENDLEEELSNAKREWTYKLMEVENLKPDERLTDEMRQLKTEFEEVNRKLFILQNENENECKNYKKELDKKFEIFKKVKNDARIELDGEQERLSKVLKDLQDTHGELKENIKTCRDEFNDFEKRIGEAEVNFHSMELAVVPLKKKLASTSQALTQVQEEKKQVEGEANNWKKKYVNELEKVQQELYTRQNLATSIEEIKGYTRCFAYANERQMPDEFHINYVDRCICENSGEKRVQVFDRVVLEEIHKDHKRLYNECIPFLEKYISKLINCSIIVVSQQPTAPMKKTLLKQLIEQYGENYKMTLNILHLDGSIKHSDVGLDNPTEIRDLSQDEECMNILTLDTKLGKDEESHSMNIYIGSMSTVQLNRELDDAPSVLSHILTKTKQCFVFKINAGENIEKALALAGKLKRTITLPQLD.

Residues 1–29 form a disordered region; it reads MNNSKIPKLSFHSDPNNVTRDFPKTKRQK. Residues 81-360 adopt a coiled-coil conformation; sequence IERVKNNERK…VNELEKVQQE (280 aa).

Interacts with KAR3; the interaction is direct.

The protein localises to the nucleus. It localises to the cytoplasm. Its subcellular location is the cytoskeleton. It is found in the microtubule organizing center. The protein resides in the spindle pole body. The protein localises to the spindle. In terms of biological role, together with the minus end-directed microtubule motor KAR3, involved in spindle midzone assembly, karyogamy (nuclear fusion) during mating, and with an essential function in meiosis I. To contribute to spindle midzone assembly during mitotic metaphase, the KAR3-CIK1 motor cross-links anti-parallel microtubules to align them on the spindle axis; as the motor travels polewards splayed microtubules are pulled into alignment. During the karyogamy (nuclear fusion) step of mating, KAR3-CIK1 cross-links antiparallel cytoplasmic microtubules emanating from the spindle pole bodies of mating partners; the motor activity of KAR3 creates the force that pulls the nuclei together by sliding cross-linked microtubules past one another. KAR3-CIK1 promotes microtubule shortening predominantly from the microtubule plus-end. Required for interhomolog recombination, synapsis of homologous chromosomes and establishment of a meiosis I spindle. The protein is Spindle pole body-associated protein CIK1 (CIK1) of Saccharomyces cerevisiae (strain ATCC 204508 / S288c) (Baker's yeast).